We begin with the raw amino-acid sequence, 336 residues long: tRNA (guanine(37)-N(1))-methyltransferase Trm5b (336 aa).

Residues Arg-186, 223–224 (DI), 251–252 (DV), and Asn-265 contribute to the S-adenosyl-L-methionine site.

Belongs to the class I-like SAM-binding methyltransferase superfamily. TRM5/TYW2 family. Monomer.

It is found in the cytoplasm. The catalysed reaction is guanosine(37) in tRNA + S-adenosyl-L-methionine = N(1)-methylguanosine(37) in tRNA + S-adenosyl-L-homocysteine + H(+). Functionally, specifically methylates the N1 position of guanosine-37 in various tRNAs. This Methanocaldococcus jannaschii (strain ATCC 43067 / DSM 2661 / JAL-1 / JCM 10045 / NBRC 100440) (Methanococcus jannaschii) protein is tRNA (guanine(37)-N(1))-methyltransferase Trm5b (trm5b).